The following is a 317-amino-acid chain: Putative cuticle collagen 80 (317 aa).

The tract at residues 80 to 262 is disordered; that stretch reads CNCGPQASNC…GAPGNDGAPG (183 aa). Triple-helical region regions lie at residues 92 to 124, 137 to 199, and 202 to 264; these read GPPG…AGPA, GAPG…SGQR, and GLPG…PGSD. 3 stretches are compositionally biased toward low complexity: residues 108-124, 135-145, and 175-206; these read QPGP…AGPA, PQGAPGPAGAP, and AGDA…LPGP. 2 stretches are compositionally biased toward pro residues: residues 207 to 219 and 230 to 240; these read SGRP…PGAP and PAGPPGPPGPN. A compositionally biased stretch (low complexity) spans 242-262; it reads QPGHPGQDGQPGAPGNDGAPG.

It belongs to the cuticular collagen family. In terms of assembly, collagen polypeptide chains are complexed within the cuticle by disulfide bonds and other types of covalent cross-links.

Nematode cuticles are composed largely of collagen-like proteins. The cuticle functions both as an exoskeleton and as a barrier to protect the worm from its environment. This chain is Putative cuticle collagen 80 (col-80), found in Caenorhabditis elegans.